The sequence spans 1054 residues: Proteoglycan 4 (1054 aa).

Positions 1-24 are cleaved as a signal peptide; sequence MGWKILPVCLSLLLPVVLIQQVSS. SMB domains are found at residues 26–69 and 66–108; these read DLSS…PELS and PELS…EEVH. Disulfide bonds link C30–C34, C30–C46, C34–C64, C44–C46, C44–C57, C50–C56, C57–C64, C70–C74, C70–C86, C74–C104, C84–C86, C84–C97, C90–C96, and C97–C104. An N-linked (GlcNAc...) asparagine glycan is attached at N109. The span at 110-125 shows a compositional bias: low complexity; the sequence is STSPSSKTAPTPAGAS. The interval 110 to 764 is disordered; the sequence is STSPSSKTAP…PLIPGPPVLF (655 aa). O-linked (GalNAc...) serine glycosylation occurs at S135. Positions 162 to 175 are enriched in low complexity; sequence QESSSSSSSSSSTI. The span at 188-200 shows a compositional bias: basic and acidic residues; the sequence is ELQKNPNVKDNKK. The span at 229-238 shows a compositional bias: pro residues; that stretch reads TPPPPDPPTT. 2 O-linked (GalNAc...) threonine glycosylation sites follow: T237 and T250. Low complexity predominate over residues 286–295; that stretch reads TTATNKQSSA. T301 is a glycosylation site (O-linked (GalNAc...) threonine). A glycan (O-linked (GalNAc...) serine) is linked at S302. Residues 302 to 318 show a composition bias toward basic and acidic residues; that stretch reads SVKETRSAEKTSDKDVE. O-linked (GalNAc...) threonine glycosylation is present at T306. O-linked (GalNAc...) serine glycosylation occurs at S313. The stretch at 317-324 is one 1; approximate repeat; the sequence is VEPTSTTP. Positions 317–618 are 37 X 8 AA repeats of K-X-P-X-P-T-T-X; the sequence is VEPTSTTPKN…TPKKPEPTTT (302 aa). Residues 319–328 are compositionally biased toward polar residues; sequence PTSTTPKNSA. The 2; approximate repeat unit spans residues 325–332; sequence KNSAPTTT. An O-linked (GalNAc...) serine glycan is attached at S327. Residues 329 to 339 show a composition bias toward low complexity; it reads PTTTKKPVTTT. 11 O-linked (GalNAc...) threonine glycosylation sites follow: T330, T338, T354, T362, T369, T377, T378, T385, T386, T393, and T394. Residues 333 to 340 form a 3; approximate repeat; sequence KKPVTTTK. Residues 349–356 form a 4; approximate repeat; the sequence is QEPEPTTA. The stretch at 357–364 is repeat 5; that stretch reads KEPPPTTK. The segment covering 364 to 399 has biased composition (basic and acidic residues); that stretch reads KKPEPTTRKEPEPTTPKEPEPTTPKEPEPTTPKEPE. The stretch at 365–371 is one 6; approximate repeat; that stretch reads KPEPTTR. 5 consecutive repeat copies span residues 372–379, 380–387, 388–395, 396–403, and 404–411. Pro residues predominate over residues 400–426; that stretch reads PTTPKEPPPTTKKPEPTTPKEPGPTTP. The 12; approximate repeat unit spans residues 412–418; it reads KPEPTTP. O-linked (GalNAc...) threonine glycosylation is found at T416, T417, T424, T432, T433, T440, T441, and T448. 3 tandem repeats follow at residues 419-426, 427-434, and 435-442. Positions 427–550 are enriched in basic and acidic residues; that stretch reads KEPEPTTTKE…PEPTTPKKPE (124 aa). One copy of the 16; approximate repeat lies at 443-450; it reads KEPESTTR. 21 tandem repeats follow at residues 451-458, 459-466, 467-474, 475-482, 483-490, 491-498, 499-506, 507-514, 515-522, 523-530, 531-538, 539-546, 547-554, 555-562, 563-570, 571-578, 579-586, 587-594, 595-602, 603-610, and 611-618. 14 O-linked (GalNAc...) threonine glycosylation sites follow: T472, T480, T481, T488, T489, T496, T497, T504, T505, T512, T520, T521, T528, and T529. The segment covering 551-562 has biased composition (pro residues); sequence PTTPKEPVPTTP. T553, T560, T561, T568, T569, T576, and T577 each carry an O-linked (GalNAc...) threonine glycan. Residues 563 to 614 show a composition bias toward basic and acidic residues; it reads KEPEPTTPKEPEPTTPKEPEPTTRKEPEPTTPKEPEPTTPKEPEPTTPKKPE. 3 O-linked (GalNAc...) threonine glycosylation sites follow: T592, T600, and T601. Over residues 615-624 the composition is skewed to low complexity; that stretch reads PTTTSPKTTT. O-linked (GalNAc...) threonine glycosylation is found at T622, T624, T628, T629, and T692. Over residues 672–699 the composition is skewed to basic residues; the sequence is KPTKKPTKAPKKPTSTKKPKTPKTRKPK. Residues 700 to 712 are compositionally biased toward low complexity; it reads TTPSPLKTTSATP. Residues 713–735 show a composition bias toward polar residues; that stretch reads ELNTTPLEVMLPTTTIPKQTPNP. A disulfide bridge connects residues C795 and C1053. Hemopexin repeat units lie at residues 797-840 and 841-888; these read GKPV…VWGI and PSPI…FGGL. N808 carries N-linked (GlcNAc...) asparagine glycosylation. T810 is a glycosylation site (O-linked (GalNAc...) threonine). Residue N938 is glycosylated (N-linked (GlcNAc...) asparagine).

In terms of assembly, homodimer; disulfide-linked. Post-translationally, N-glycosylated. In terms of processing, O-glycosylated; contains glycosaminoglycan chondroitin sulfate and keratan sulfate. O-glycosylated with sialylated oligosaccharides which are predominantly represented by the monosialylated core type I structure, NeuNAcalpha2-3Galbeta1-3GalNAc, with smaller amounts of disialylated O-glycans. The disulfide bond between Cys-795 and Cys-1053 is essential for protein cleavage. Post-translationally, proteolytically cleaved by cathepsin CTSG. Highly expressed in cartilage, bone and liver and weakly expressed in heart, brain and muscle. Expressed in the surface chondrocytes and in synovial intimal cells. Isoform B is expressed in bone, small intestine, muscle, testis, heart, liver and lung. Isoform C and isoform D are widely expressed.

It is found in the secreted. Its function is as follows. Plays a role in boundary lubrication within articulating joints. Prevents protein deposition onto cartilage from synovial fluid by controlling adhesion-dependent synovial growth and inhibiting the adhesion of synovial cells to the cartilage surface. This Mus musculus (Mouse) protein is Proteoglycan 4 (Prg4).